The chain runs to 1194 residues: Pre-mRNA-processing ATP-dependent RNA helicase prp-5 (1194 aa).

Disordered regions lie at residues M1–K201, A224–A248, and A452–G484. Basic and acidic residues-rich tracts occupy residues R21–D37 and S44–P154. Residues P156–T176 show a composition bias toward polar residues. Over residues E177–R186 the composition is skewed to basic and acidic residues. Over residues S232–A248 the composition is skewed to low complexity. The segment covering E455–N469 has biased composition (basic and acidic residues). The Q motif motif lies at Q561 to M589. Residues L592–I770 enclose the Helicase ATP-binding domain. An ATP-binding site is contributed by A605–T612. A DEAD box motif is present at residues D718–D721. A Helicase C-terminal domain is found at R797–R945. 2 disordered regions span residues V952 to K1011 and D1025 to A1056. Composition is skewed to basic and acidic residues over residues G967–M980, E997–K1011, and D1025–A1036.

The protein belongs to the DEAD box helicase family. DDX46/PRP5 subfamily.

The protein localises to the nucleus. It catalyses the reaction ATP + H2O = ADP + phosphate + H(+). ATP-dependent RNA helicase involved spliceosome assembly and in nuclear splicing. Catalyzes an ATP-dependent conformational change of U2 snRNP. Bridges U1 and U2 snRNPs and enables stable U2 snRNP association with intron RNA. This Neurospora crassa (strain ATCC 24698 / 74-OR23-1A / CBS 708.71 / DSM 1257 / FGSC 987) protein is Pre-mRNA-processing ATP-dependent RNA helicase prp-5 (prp-5).